A 282-amino-acid chain; its full sequence is Pantothenate synthetase (282 aa).

ATP is bound at residue 30–37; that stretch reads MGYLHEGH. Residue histidine 37 is the Proton donor of the active site. Glutamine 61 lines the (R)-pantoate pocket. Beta-alanine is bound at residue glutamine 61. Residue 147 to 150 participates in ATP binding; sequence GMKD. Glutamine 153 provides a ligand contact to (R)-pantoate. ATP-binding positions include valine 176 and 184–187; that span reads KSSR.

Belongs to the pantothenate synthetase family. As to quaternary structure, homodimer.

Its subcellular location is the cytoplasm. It carries out the reaction (R)-pantoate + beta-alanine + ATP = (R)-pantothenate + AMP + diphosphate + H(+). Its pathway is cofactor biosynthesis; (R)-pantothenate biosynthesis; (R)-pantothenate from (R)-pantoate and beta-alanine: step 1/1. Its function is as follows. Catalyzes the condensation of pantoate with beta-alanine in an ATP-dependent reaction via a pantoyl-adenylate intermediate. This Bacillus mycoides (strain KBAB4) (Bacillus weihenstephanensis) protein is Pantothenate synthetase.